Consider the following 205-residue polypeptide: Methylthioribulose-1-phosphate dehydratase (205 aa).

Residues His96 and His98 each contribute to the Zn(2+) site.

Belongs to the aldolase class II family. MtnB subfamily. Zn(2+) serves as cofactor.

The enzyme catalyses 5-(methylsulfanyl)-D-ribulose 1-phosphate = 5-methylsulfanyl-2,3-dioxopentyl phosphate + H2O. The protein operates within amino-acid biosynthesis; L-methionine biosynthesis via salvage pathway; L-methionine from S-methyl-5-thio-alpha-D-ribose 1-phosphate: step 2/6. Catalyzes the dehydration of methylthioribulose-1-phosphate (MTRu-1-P) into 2,3-diketo-5-methylthiopentyl-1-phosphate (DK-MTP-1-P). This Pseudomonas paraeruginosa (strain DSM 24068 / PA7) (Pseudomonas aeruginosa (strain PA7)) protein is Methylthioribulose-1-phosphate dehydratase.